The following is a 245-amino-acid chain: 1-(5-phosphoribosyl)-5-[(5-phosphoribosylamino)methylideneamino] imidazole-4-carboxamide isomerase (245 aa).

The active-site Proton acceptor is the aspartate 8. Residue aspartate 130 is the Proton donor of the active site.

The protein belongs to the HisA/HisF family.

It is found in the cytoplasm. The catalysed reaction is 1-(5-phospho-beta-D-ribosyl)-5-[(5-phospho-beta-D-ribosylamino)methylideneamino]imidazole-4-carboxamide = 5-[(5-phospho-1-deoxy-D-ribulos-1-ylimino)methylamino]-1-(5-phospho-beta-D-ribosyl)imidazole-4-carboxamide. Its pathway is amino-acid biosynthesis; L-histidine biosynthesis; L-histidine from 5-phospho-alpha-D-ribose 1-diphosphate: step 4/9. The chain is 1-(5-phosphoribosyl)-5-[(5-phosphoribosylamino)methylideneamino] imidazole-4-carboxamide isomerase from Pseudomonas putida (strain W619).